The following is a 428-amino-acid chain: L-rhamnonate dehydratase (428 aa).

Residues H56 and R82 each contribute to the substrate site. Residues D249, E275, and E303 each contribute to the Mg(2+) site. H352 serves as the catalytic Proton acceptor. Substrate is bound at residue E372.

It belongs to the mandelate racemase/muconate lactonizing enzyme family. RhamD subfamily. In terms of assembly, homooctamer; tetramer of dimers. It depends on Mg(2+) as a cofactor.

The enzyme catalyses L-rhamnonate = 2-dehydro-3-deoxy-L-rhamnonate + H2O. In terms of biological role, catalyzes the dehydration of L-rhamnonate to 2-keto-3-deoxy-L-rhamnonate (KDR). In Shigella sonnei (strain Ss046), this protein is L-rhamnonate dehydratase.